The primary structure comprises 465 residues: Chromosomal replication initiator protein DnaA (465 aa).

The segment at 1 to 85 is domain I, interacts with DnaA modulators; that stretch reads MSGFWESCLQ…IALVIGSGKA (85 aa). Positions 85–129 are domain II; that stretch reads ATAARIQATTTDSGQNAPANPATTSEKRTAASEKARGKGSNYEKS. The segment covering 93–108 has biased composition (polar residues); it reads TTTDSGQNAPANPATT. The interval 93-125 is disordered; sequence TTTDSGQNAPANPATTSEKRTAASEKARGKGSN. A compositionally biased stretch (basic and acidic residues) spans 109–125; that stretch reads SEKRTAASEKARGKGSN. The domain III, AAA+ region stretch occupies residues 130–346; sequence RLFPSFTFDN…GALKKVLAYS (217 aa). Residues G174, G176, K177, and T178 each contribute to the ATP site. Residues 347–465 form a domain IV, binds dsDNA region; sequence SFHGRVIALD…LHVLLQVLKG (119 aa).

Belongs to the DnaA family. Oligomerizes as a right-handed, spiral filament on DNA at oriC.

The protein resides in the cytoplasm. Its function is as follows. Plays an essential role in the initiation and regulation of chromosomal replication. ATP-DnaA binds to the origin of replication (oriC) to initiate formation of the DNA replication initiation complex once per cell cycle. Binds the DnaA box (a 9 base pair repeat at the origin) and separates the double-stranded (ds)DNA. Forms a right-handed helical filament on oriC DNA; dsDNA binds to the exterior of the filament while single-stranded (ss)DNA is stabiized in the filament's interior. The ATP-DnaA-oriC complex binds and stabilizes one strand of the AT-rich DNA unwinding element (DUE), permitting loading of DNA polymerase. After initiation quickly degrades to an ADP-DnaA complex that is not apt for DNA replication. Binds acidic phospholipids. The protein is Chromosomal replication initiator protein DnaA of Dechloromonas aromatica (strain RCB).